A 173-amino-acid chain; its full sequence is MAYDVFTKVVSQADSRGEFLSNEQLDALANVVKEGNKRLDVVNRITSNASTIVTNAARALFEEQPQLIAPGGNAYTNRRMAACLRDMEIILRYITYAILAGDASILDDRCLNGLRETYQALGTPGSSVAVGIQKMKEAAINIANDPNGITKGDCSALISEVASYFDRAAAAVA.

At Asn73 the chain carries N4-methylasparagine. Cys83 and Cys154 together coordinate (2R,3E)-phycocyanobilin.

It belongs to the phycobiliprotein family. In terms of assembly, heterodimer of an alpha and a beta subunit. Heterodimers further assemble into trimers and the trimers into hexamers. In terms of processing, contains two covalently linked bilin chromophores.

The protein resides in the cellular thylakoid membrane. In terms of biological role, light-harvesting photosynthetic bile pigment-protein from the phycobiliprotein complex (phycobilisome, PBS). Phycocyanin is the major phycobiliprotein in the PBS rod. This Mastigocladus laminosus (Fischerella sp.) protein is C-phycocyanin beta subunit (cpcB).